The sequence spans 489 residues: Probable transporter MCH1 (489 aa).

A run of 3 helical transmembrane segments spans residues 30-50 (IAYI…LISL), 68-88 (MIVT…GIIA), and 92-112 (GPIT…AYLA). Asn123 is a glycosylation site (N-linked (GlcNAc...) asparagine). 8 consecutive transmembrane segments (helical) span residues 132-152 (TLVC…SALI), 163-183 (LLSI…GSQF), 202-222 (VFKA…IATS), 279-299 (VLYI…MFIA), 307-327 (VLAG…YALT), 351-371 (WILL…YMLS), 388-408 (FYIG…YPTI), and 421-441 (AYGT…LIYA). An N-linked (GlcNAc...) asparagine glycan is attached at Asn450. A helical membrane pass occupies residues 462–482 (ETTALEFCAAILLTVVVTVLW).

It belongs to the major facilitator superfamily.

It localises to the vacuole membrane. Its function is as follows. Probable transporter. The protein is Probable transporter MCH1 (MCH1) of Candida glabrata (strain ATCC 2001 / BCRC 20586 / JCM 3761 / NBRC 0622 / NRRL Y-65 / CBS 138) (Yeast).